Here is a 688-residue protein sequence, read N- to C-terminus: Glycine--tRNA ligase beta subunit (688 aa).

Belongs to the class-II aminoacyl-tRNA synthetase family. As to quaternary structure, tetramer of two alpha and two beta subunits.

The protein localises to the cytoplasm. It carries out the reaction tRNA(Gly) + glycine + ATP = glycyl-tRNA(Gly) + AMP + diphosphate. The chain is Glycine--tRNA ligase beta subunit from Psychromonas ingrahamii (strain DSM 17664 / CCUG 51855 / 37).